Consider the following 297-residue polypeptide: Homoserine kinase (297 aa).

84 to 94 provides a ligand contact to ATP; it reads PLSKGFGSSAA.

It belongs to the GHMP kinase family. Homoserine kinase subfamily.

The protein localises to the cytoplasm. The enzyme catalyses L-homoserine + ATP = O-phospho-L-homoserine + ADP + H(+). Its pathway is amino-acid biosynthesis; L-threonine biosynthesis; L-threonine from L-aspartate: step 4/5. Catalyzes the ATP-dependent phosphorylation of L-homoserine to L-homoserine phosphate. The chain is Homoserine kinase from Shouchella clausii (strain KSM-K16) (Alkalihalobacillus clausii).